Reading from the N-terminus, the 418-residue chain is UDP-N-acetylglucosamine 1-carboxyvinyltransferase 2 (418 aa).

Phosphoenolpyruvate is bound at residue 22–23 (KN). Arg92 provides a ligand contact to UDP-N-acetyl-alpha-D-glucosamine. Cys116 functions as the Proton donor in the catalytic mechanism. The residue at position 116 (Cys116) is a 2-(S-cysteinyl)pyruvic acid O-phosphothioketal. Residues Asp305 and Ile327 each contribute to the UDP-N-acetyl-alpha-D-glucosamine site.

The protein belongs to the EPSP synthase family. MurA subfamily.

Its subcellular location is the cytoplasm. It carries out the reaction phosphoenolpyruvate + UDP-N-acetyl-alpha-D-glucosamine = UDP-N-acetyl-3-O-(1-carboxyvinyl)-alpha-D-glucosamine + phosphate. It participates in cell wall biogenesis; peptidoglycan biosynthesis. In terms of biological role, cell wall formation. Adds enolpyruvyl to UDP-N-acetylglucosamine. This chain is UDP-N-acetylglucosamine 1-carboxyvinyltransferase 2, found in Mesorhizobium japonicum (strain LMG 29417 / CECT 9101 / MAFF 303099) (Mesorhizobium loti (strain MAFF 303099)).